The primary structure comprises 273 residues: WIMGHMVNAIYQIDEFVNLGANSIETDVSFDDNANPEYTYHGIPCDCGRSCLKWENYNDFLKGLRSATTPGNSKYQSKLILVVFDLKTGSLYDNQASEAGKKLAKNLLKHYWNNGNNGGRAYIVLSIPDLNHYPLIKGFTDTLKQEGHPELLEKVGYDFSGNDAIGDVAKAYKKAGVSGHVWQSDGITNCLLRGLSRVKDAVANRDSGKGYINKVYYWTVDKRATTRDALDAGVDGVMTDYPDVIADVMNEAAYKNKVRLATYEDSPWVTFKK.

The active site involves H5. Residues E25 and D27 each contribute to the Mg(2+) site. The Nucleophile role is filled by H41. Disulfide bonds link C45–C51 and C47–C190. Residue D85 coordinates Mg(2+).

The protein belongs to the arthropod phospholipase D family. Class II subfamily. It depends on Mg(2+) as a cofactor. Expressed by the venom gland.

Its subcellular location is the secreted. The enzyme catalyses an N-(acyl)-sphingosylphosphocholine = an N-(acyl)-sphingosyl-1,3-cyclic phosphate + choline. It catalyses the reaction an N-(acyl)-sphingosylphosphoethanolamine = an N-(acyl)-sphingosyl-1,3-cyclic phosphate + ethanolamine. The catalysed reaction is a 1-acyl-sn-glycero-3-phosphocholine = a 1-acyl-sn-glycero-2,3-cyclic phosphate + choline. It carries out the reaction a 1-acyl-sn-glycero-3-phosphoethanolamine = a 1-acyl-sn-glycero-2,3-cyclic phosphate + ethanolamine. Dermonecrotic toxins cleave the phosphodiester linkage between the phosphate and headgroup of certain phospholipids (sphingolipid and lysolipid substrates), forming an alcohol (often choline) and a cyclic phosphate. This toxin acts on sphingomyelin (SM). It may also act on ceramide phosphoethanolamine (CPE), lysophosphatidylcholine (LPC) and lysophosphatidylethanolamine (LPE), but not on lysophosphatidylserine (LPS), and lysophosphatidylglycerol (LPG). It acts by transphosphatidylation, releasing exclusively cyclic phosphate products as second products. Induces dermonecrosis, hemolysis, increased vascular permeability, edema, inflammatory response, and platelet aggregation. In Loxosceles hirsuta (Recluse spider), this protein is Dermonecrotic toxin LhSicTox-alphaIA2bvi.